Consider the following 329-residue polypeptide: Phenylalanine--tRNA ligase alpha subunit (329 aa).

Residue Glu-254 coordinates Mg(2+).

This sequence belongs to the class-II aminoacyl-tRNA synthetase family. Phe-tRNA synthetase alpha subunit type 1 subfamily. Tetramer of two alpha and two beta subunits. The cofactor is Mg(2+).

The protein localises to the cytoplasm. It catalyses the reaction tRNA(Phe) + L-phenylalanine + ATP = L-phenylalanyl-tRNA(Phe) + AMP + diphosphate + H(+). The polypeptide is Phenylalanine--tRNA ligase alpha subunit (Haemophilus influenzae (strain PittEE)).